The chain runs to 301 residues: Growth-regulating factor 2 (301 aa).

Residues 11-46 (LFTATQWQELEHQALIYKYMAAGAPVPPDLLLHLRH) enclose the QLQ domain. Short sequence motifs (bipartite nuclear localization signal) lie at residues 83–102 (RRVE…KKWR) and 120–127 (RGKNRSRK). Positions 87–131 (DPEPGRCRRTDGKKWRCSREAYGESKYCEKHMHRGKNRSRKPVEM) constitute a WRC domain.

The protein belongs to the GRF family.

It is found in the nucleus. Its function is as follows. Transcription activator that plays a regulatory role in gibberellin-induced stem elongation. The polypeptide is Growth-regulating factor 2 (GRF2) (Oryza sativa subsp. japonica (Rice)).